The chain runs to 84 residues: Large ribosomal subunit protein bL31B (84 aa).

This sequence belongs to the bacterial ribosomal protein bL31 family. Type B subfamily. As to quaternary structure, part of the 50S ribosomal subunit.

This Acinetobacter baumannii (strain AB307-0294) protein is Large ribosomal subunit protein bL31B.